The sequence spans 596 residues: Dihydroxy-acid dehydratase pbrD, mitochondrial (596 aa).

Residues 1 to 18 (MATSSIRSRALGLSRRAR) constitute a mitochondrion transit peptide. Cysteine 84 lines the [2Fe-2S] cluster pocket. Aspartate 116 is a binding site for Mg(2+). Cysteine 157 is a binding site for [2Fe-2S] cluster. Aspartate 158 is a binding site for Mg(2+). Cysteine 230 is a [2Fe-2S] cluster binding site. Glutamate 483 is a Mg(2+) binding site. The active-site Proton acceptor is the serine 509.

It belongs to the IlvD/Edd family. Requires [2Fe-2S] cluster as cofactor. Mg(2+) is required as a cofactor.

The protein resides in the mitochondrion. The catalysed reaction is (2R)-2,3-dihydroxy-3-methylbutanoate = 3-methyl-2-oxobutanoate + H2O. It carries out the reaction (2R,3R)-2,3-dihydroxy-3-methylpentanoate = (S)-3-methyl-2-oxopentanoate + H2O. It participates in amino-acid biosynthesis; L-isoleucine biosynthesis; L-isoleucine from 2-oxobutanoate: step 3/4. The protein operates within amino-acid biosynthesis; L-valine biosynthesis; L-valine from pyruvate: step 3/4. DHAD activity is not inhibited by the dihydroxyacid dehydratase inhibitor aspterric acid (AA). In terms of biological role, dihydroxyacid dehydratase; part of the gene cluster that mediates the biosynthesis of the sesquiterpenoid aspterric acid (AA), an inhibitor of dihydroxy-acid dehydratase (DHAD) effective as an herbicide. Performs the third step in the common pathway leading to biosynthesis of branched-chain amino acids. Catalyzes the dehydration of (2R,3R)-2,3-dihydroxy-3-methylpentanoate (2,3-dihydroxy-3-methylvalerate) into 2-oxo-3-methylpentanoate (2-oxo-3-methylvalerate) and of (2R)-2,3-dihydroxy-3-methylbutanoate (2,3-dihydroxyisovalerate) into 2-oxo-3-methylbutanoate (2-oxoisovalerate), the penultimate precursor to L-isoleucine and L-valine, respectively. PbrD confers self-resistance in the presence of the dihydroxyacid dehydratase inhibitor aspterric acid (AA) produced by the ast cluster. This chain is Dihydroxy-acid dehydratase pbrD, mitochondrial, found in Penicillium brasilianum.